The primary structure comprises 803 residues: Translation initiation factor IF-2 (803 aa).

Disordered stretches follow at residues 95-125 and 138-209; these read PVVEQKRETEPAPTQEVPLTSDTTNLNEKAE and EVKE…KLEQ. A compositionally biased stretch (polar residues) spans 111 to 121; it reads VPLTSDTTNLN. Residues 138–155 are compositionally biased toward basic and acidic residues; the sequence is EVKEEAKKTPSEKKETPK. The segment covering 156 to 167 has biased composition (basic residues); sequence KGPRKETRRSRK. The span at 168–188 shows a compositional bias: basic and acidic residues; sequence PDKEDKWEREELHMTKLVEER. In terms of domain architecture, tr-type G spans 302–471; that stretch reads PRAPVVTIMG…LLQAEVLELK (170 aa). A G1 region spans residues 311 to 318; sequence GHVDHGKT. 311-318 contacts GTP; it reads GHVDHGKT. A G2 region spans residues 336–340; it reads GITQH. A G3 region spans residues 357-360; that stretch reads DTPG. Residues 357–361 and 411–414 each bind GTP; these read DTPGH and NKID. The G4 stretch occupies residues 411–414; sequence NKID. The segment at 447 to 449 is G5; it reads SAK.

It belongs to the TRAFAC class translation factor GTPase superfamily. Classic translation factor GTPase family. IF-2 subfamily.

The protein resides in the cytoplasm. One of the essential components for the initiation of protein synthesis. Protects formylmethionyl-tRNA from spontaneous hydrolysis and promotes its binding to the 30S ribosomal subunits. Also involved in the hydrolysis of GTP during the formation of the 70S ribosomal complex. The protein is Translation initiation factor IF-2 of Coxiella burnetii (strain CbuG_Q212) (Coxiella burnetii (strain Q212)).